Consider the following 95-residue polypeptide: Protein TusB (95 aa).

Belongs to the DsrH/TusB family. As to quaternary structure, heterohexamer, formed by a dimer of trimers. The hexameric TusBCD complex contains 2 copies each of TusB, TusC and TusD. The TusBCD complex interacts with TusE.

The protein localises to the cytoplasm. Functionally, part of a sulfur-relay system required for 2-thiolation of 5-methylaminomethyl-2-thiouridine (mnm(5)s(2)U) at tRNA wobble positions. The chain is Protein TusB from Escherichia coli O157:H7.